A 424-amino-acid polypeptide reads, in one-letter code: Glutamyl-tRNA reductase (424 aa).

Residues 50–53, serine 98, 103–105, and glutamine 109 each bind substrate; these read TCNR and EDQ. Cysteine 51 serves as the catalytic Nucleophile. An NADP(+)-binding site is contributed by 178–183; sequence GSGEMG.

It belongs to the glutamyl-tRNA reductase family. Homodimer.

The enzyme catalyses (S)-4-amino-5-oxopentanoate + tRNA(Glu) + NADP(+) = L-glutamyl-tRNA(Glu) + NADPH + H(+). It functions in the pathway porphyrin-containing compound metabolism; protoporphyrin-IX biosynthesis; 5-aminolevulinate from L-glutamyl-tRNA(Glu): step 1/2. Functionally, catalyzes the NADPH-dependent reduction of glutamyl-tRNA(Glu) to glutamate 1-semialdehyde (GSA). This chain is Glutamyl-tRNA reductase, found in Methanoregula boonei (strain DSM 21154 / JCM 14090 / 6A8).